Reading from the N-terminus, the 639-residue chain is Pheromone B alpha 1 receptor (639 aa).

The next 7 helical transmembrane spans lie at 8 to 28 (LFPI…PWHL), 37 to 57 (FFMM…VAWA), 70 to 90 (ISIR…LCII), 113 to 133 (ILVD…LQYI), 163 to 183 (VWPV…LLQF), 209 to 229 (MALA…VIVL), and 272 to 292 (LTRW…GFAE). 4 disordered regions span residues 375–416 (PRPM…SSPI), 490–516 (TVPH…SSSA), 532–563 (SADV…RLPS), and 611–639 (TTAG…RASV). The segment covering 383–398 (SSSGFSSSDSTRFGSS) has biased composition (low complexity). Low complexity-rich tracts occupy residues 541 to 551 (GSSAGGVASTS) and 611 to 621 (TTAGAPATTTP).

Belongs to the G-protein coupled receptor 4 family.

It is found in the membrane. Its function is as follows. Receptor for the BAP1 pheromone, a prenylated mating factor. Has a role in the initiation of B-regulated nuclear migration. In Schizophyllum commune (Split gill fungus), this protein is Pheromone B alpha 1 receptor (BAR1).